A 310-amino-acid chain; its full sequence is Methionyl-tRNA formyltransferase (310 aa).

(6S)-5,6,7,8-tetrahydrofolate is bound at residue 111-114; the sequence is SLLP.

The protein belongs to the Fmt family.

It catalyses the reaction L-methionyl-tRNA(fMet) + (6R)-10-formyltetrahydrofolate = N-formyl-L-methionyl-tRNA(fMet) + (6S)-5,6,7,8-tetrahydrofolate + H(+). In terms of biological role, attaches a formyl group to the free amino group of methionyl-tRNA(fMet). The formyl group appears to play a dual role in the initiator identity of N-formylmethionyl-tRNA by promoting its recognition by IF2 and preventing the misappropriation of this tRNA by the elongation apparatus. This is Methionyl-tRNA formyltransferase from Rhodopseudomonas palustris (strain BisB18).